A 253-amino-acid chain; its full sequence is Dof zinc finger protein DOF3.4 (253 aa).

Residues 30-84 (LPCPRCDSSNTKFCYYNNYNFSQPRHFCKACRRYWTHGGTLRDVPVGGGTRKSAK) form a Dof-type zinc finger. 4 residues coordinate Zn(2+): C32, C35, C57, and C60. A disordered region spans residues 73–103 (VPVGGGTRKSAKRSRTCSNSSSSSVSGVVSN). The segment covering 90 to 103 (SNSSSSSVSGVVSN) has biased composition (low complexity).

As to quaternary structure, interacts with OBF4 or OBF5. In terms of tissue distribution, constitutively expressed in the whole plant.

Its subcellular location is the nucleus. Transcription factor that binds specifically to a 5'-AA[AG]G-3' consensus core sequence. Enhances the DNA binding of OBF transcription factors to OCS elements. This Arabidopsis thaliana (Mouse-ear cress) protein is Dof zinc finger protein DOF3.4 (DOF3.4).